The primary structure comprises 567 residues: Protein phosphatase 1 regulatory inhibitor subunit 16B (567 aa).

Residues 15 to 55 (EKVPTLERLRAAQKRRAQQLKKWAQYEQDLQHRKRKHERKR) are a coiled coil. At Ser-69 the chain carries Phosphoserine. 4 ANK repeats span residues 100 to 129 (DGLT…NVNA), 133 to 162 (ELWT…DLLA), 228 to 257 (QGAT…RVDV), and 261 to 290 (DGWE…SLSA). 3 positions are modified to phosphoserine: Ser-333, Ser-337, and Ser-350. The segment at 378–403 (RTSTYNGDIRETRTDQENKDPNPRLE) is disordered. A compositionally biased stretch (basic and acidic residues) spans 385-403 (DIRETRTDQENKDPNPRLE). Ser-476 is subject to Phosphoserine. The segment covering 504–515 (SSMARTGESSSE) has biased composition (polar residues). Residues 504 to 525 (SSMARTGESSSEGKAPLIGGRT) form a disordered region. An ANK 5 repeat occupies 530-559 (SNGTSVYYTVTSGDPPLLKFKAPIEEMEEK). A lipid anchor (S-palmitoyl cysteine) is attached at Cys-563. A Cysteine methyl ester modification is found at Cys-564. A lipid anchor (S-farnesyl cysteine) is attached at Cys-564. Positions 565–567 (RIS) are cleaved as a propeptide — removed in mature form.

Interacts with PPP1CA, PPP1CB and MSN. Interacts (via its fourth ankyrin repeat) with the mature dimeric form of RPSA/LAMR1. Interacts with EEF1A1. Interacts with PTEN. Interacts with ECE1. In terms of processing, phosphorylated by PKA and, after PKA priming, by GSK3B. Phosphorylation by GSK3B reduces its association with PP1C and enhances PP1C activity. Dephosphorylation by its associated PP1C results in enhanced association with PP1C, but reduced PP1C activity.

Its subcellular location is the cell membrane. The protein localises to the nucleus. The protein resides in the cell projection. Functionally, regulator of protein phosphatase 1 (PP1) that acts as a positive regulator of pulmonary endothelial cell (EC) barrier function. Involved in the regulation of the PI3K/AKT signaling pathway, angiogenesis and endothelial cell proliferation. Regulates angiogenesis and endothelial cell proliferation through the control of ECE1 dephosphorylation, trafficking and activity. Protects the endothelial barrier from lipopolysaccharide (LPS)-induced vascular leakage. Involved in the regulation of endothelial cell filopodia extension. May be a downstream target for TGF-beta1 signaling cascade in endothelial cells. Involved in PKA-mediated moesin dephosphorylation which is important in EC barrier protection against thrombin stimulation. Promotes the interaction of PPP1CA with RPSA/LAMR1 and in turn facilitates the dephosphorylation of RPSA/LAMR1. Involved in the dephosphorylation of EEF1A1. The chain is Protein phosphatase 1 regulatory inhibitor subunit 16B (PPP1R16B) from Homo sapiens (Human).